Reading from the N-terminus, the 285-residue chain is NAD kinase (285 aa).

Asp66 acts as the Proton acceptor in catalysis. Residues 66–67 (DG), 137–138 (ND), Arg148, Arg165, Asp167, and 178–183 (TAYSMS) each bind NAD(+).

It belongs to the NAD kinase family. It depends on a divalent metal cation as a cofactor.

It localises to the cytoplasm. It carries out the reaction NAD(+) + ATP = ADP + NADP(+) + H(+). Functionally, involved in the regulation of the intracellular balance of NAD and NADP, and is a key enzyme in the biosynthesis of NADP. Catalyzes specifically the phosphorylation on 2'-hydroxyl of the adenosine moiety of NAD to yield NADP. The chain is NAD kinase from Chlorobium phaeobacteroides (strain DSM 266 / SMG 266 / 2430).